The chain runs to 551 residues: Glucose-6-phosphate isomerase (551 aa).

Residues 161-162 (GS), 212-217 (SKTFTT), Gln-356, Glu-360, His-391, and Lys-516 contribute to the D-glucose 6-phosphate site. The active-site Proton donor is the Glu-360. Catalysis depends on residues His-391 and Lys-516.

Belongs to the GPI family. Homodimer.

It is found in the cytoplasm. The protein resides in the cytosol. The enzyme catalyses alpha-D-glucose 6-phosphate = beta-D-fructose 6-phosphate. It functions in the pathway carbohydrate degradation; glycolysis; D-glyceraldehyde 3-phosphate and glycerone phosphate from D-glucose: step 2/4. In terms of biological role, in the cytoplasm, catalyzes the conversion of glucose-6-phosphate to fructose-6-phosphate, the second step in glycolysis, and the reverse reaction during gluconeogenesis. This chain is Glucose-6-phosphate isomerase (gpi1), found in Agaricus bisporus (White button mushroom).